Reading from the N-terminus, the 391-residue chain is Probable tRNA sulfurtransferase (391 aa).

One can recognise a THUMP domain in the interval Asp60–Arg167. Residues Leu185–Leu186, His210–Phe211, Arg267, Gly289, and Gln298 contribute to the ATP site.

Belongs to the ThiI family.

It is found in the cytoplasm. The catalysed reaction is [ThiI sulfur-carrier protein]-S-sulfanyl-L-cysteine + a uridine in tRNA + 2 reduced [2Fe-2S]-[ferredoxin] + ATP + H(+) = [ThiI sulfur-carrier protein]-L-cysteine + a 4-thiouridine in tRNA + 2 oxidized [2Fe-2S]-[ferredoxin] + AMP + diphosphate. It carries out the reaction [ThiS sulfur-carrier protein]-C-terminal Gly-Gly-AMP + S-sulfanyl-L-cysteinyl-[cysteine desulfurase] + AH2 = [ThiS sulfur-carrier protein]-C-terminal-Gly-aminoethanethioate + L-cysteinyl-[cysteine desulfurase] + A + AMP + 2 H(+). Its pathway is cofactor biosynthesis; thiamine diphosphate biosynthesis. Functionally, catalyzes the ATP-dependent transfer of a sulfur to tRNA to produce 4-thiouridine in position 8 of tRNAs, which functions as a near-UV photosensor. Also catalyzes the transfer of sulfur to the sulfur carrier protein ThiS, forming ThiS-thiocarboxylate. This is a step in the synthesis of thiazole, in the thiamine biosynthesis pathway. The sulfur is donated as persulfide by IscS. The sequence is that of Probable tRNA sulfurtransferase from Finegoldia magna (strain ATCC 29328 / DSM 20472 / WAL 2508) (Peptostreptococcus magnus).